Reading from the N-terminus, the 315-residue chain is MPREDRATWKSNYFLKIIQLLDDYPKCFIVGADNVGSKQMQQIRMSLRGKAVVLMGKNTMMRKAIRGHLENNSALEKLLPHIKGNVGFVFTKEDLAEVRDMLLANKVPASARAGAIAPCDVTVPAQNTGLGPEKTSFFQALGITTKISRGTIEILSDVQLIKTGDKVGASEATLLNMLNISPFSFGLIIQQVYDNGSIYSPEVLDITEDALRARFLEGVRNIASVCLQIGYPTVASVPHSVVNGYKRVLALAVETDYSFPLADKVKAFLADPSAFVVAAPVAETAAAPAASAAPAKEEKEESEESDDDMGFGLFD.

Low complexity predominate over residues 285-294; the sequence is AAAPAASAAP. Positions 285 to 315 are disordered; sequence AAAPAASAAPAKEEKEESEESDDDMGFGLFD. A compositionally biased stretch (acidic residues) spans 300–309; that stretch reads EESEESDDDM.

Belongs to the universal ribosomal protein uL10 family. As to quaternary structure, P0 forms a pentameric complex by interaction with dimers of P1 and P2. Phosphorylated.

In terms of biological role, ribosomal protein P0 is the functional equivalent of E.coli protein L10. The polypeptide is Large ribosomal subunit protein uL10 (RPLP0) (Lithobates sylvaticus (Wood frog)).